Here is a 319-residue protein sequence, read N- to C-terminus: Acetaldehyde dehydrogenase 1 (319 aa).

The active-site Acyl-thioester intermediate is the C129. NAD(+) contacts are provided by residues 160–168 and N287; that span reads SAGPGTRAN.

The protein belongs to the acetaldehyde dehydrogenase family.

The enzyme catalyses acetaldehyde + NAD(+) + CoA = acetyl-CoA + NADH + H(+). This Burkholderia lata (strain ATCC 17760 / DSM 23089 / LMG 22485 / NCIMB 9086 / R18194 / 383) protein is Acetaldehyde dehydrogenase 1.